Reading from the N-terminus, the 90-residue chain is Acylphosphatase (90 aa).

The 88-residue stretch at 3-90 (HYHAIITGRV…AHYQDFRIKG (88 aa)) folds into the Acylphosphatase-like domain. Residues R18 and N36 contribute to the active site.

This sequence belongs to the acylphosphatase family.

It catalyses the reaction an acyl phosphate + H2O = a carboxylate + phosphate + H(+). The sequence is that of Acylphosphatase (acyP) from Bacillus pumilus (strain SAFR-032).